Reading from the N-terminus, the 310-residue chain is Basic salivary proline-rich protein 4 (310 aa).

Residues 1–16 (MLLILLSVALLALSSA) form the signal peptide. Residues 14–310 (SSAESSSEDV…RPAQGQQPPQ (297 aa)) are disordered. 9 tandem repeats follow at residues 35-55 (KPEG…PPPG), 56-76 (KPQG…PPPG), 77-97 (KPEG…PHPG), 98-118 (KPER…PHPG), 119-139 (KPES…PTPG), 140-160 (KPEG…PPPG), 161-181 (KPEG…PHPG), 182-202 (KPER…PPPG), and 203-223 (KPER…PHPG). Residues 35–234 (KPEGRRPQGG…PEGPPPQEGN (200 aa)) form a 9.5 X 21 AA tandem repeats of K-P-[EQ]-[GR]-[PR]-[PR]-P-Q-G-G-N-Q-[PS]-[QH]-[RG]-[PT]-P-P-[PH]-P-G region. Over residues 48–63 (QRPPPPPGKPQGPPPQ) the composition is skewed to pro residues. 3 N-linked (GlcNAc...) asparagine glycosylation sites follow: asparagine 66, asparagine 87, and asparagine 108. The segment covering 133 to 147 (GPPPTPGKPEGPPPQ) has biased composition (pro residues). N-linked (GlcNAc...) asparagine glycans are attached at residues asparagine 150, asparagine 171, and asparagine 192. The span at 196–210 (RPPPPPGKPERPPPQ) shows a compositional bias: pro residues. Asparagine 213 is a glycosylation site (N-linked (GlcNAc...) asparagine). The span at 217–231 (GPPPHPGKPEGPPPQ) shows a compositional bias: pro residues. One copy of the 10; truncated repeat lies at 224-234 (KPEGPPPQEGN). N-linked (GlcNAc...) asparagine glycosylation is present at asparagine 234. The segment covering 258–310 (QGPPPPGKPQGPPPAGGNPQQPQAPPAGKPQGPPPPPQGGRPPRPAQGQQPPQ) has biased composition (pro residues).

In terms of processing, N-glycosylated. Post-translationally, proteolytically cleaved at the tripeptide Xaa-Pro-Gln, where Xaa in the P(3) position is mostly lysine. The endoprotease may be of microbial origin. Pyroglutamate formation found on at least Gln-46, Gln-48, Gln-67, Gln-88; Gln-90; Gln-193; Gln-288 Gln-214 and Gln-295, preferentially in diabetic, and head and neck cancer patients.

The protein localises to the secreted. The protein is Basic salivary proline-rich protein 4 (PRB4) of Homo sapiens (Human).